Reading from the N-terminus, the 1513-residue chain is DNA topoisomerase 2-binding protein 1-A (1513 aa).

BRCT domains are found at residues 101 to 189 (VYNM…YSDV) and 194 to 283 (YLCP…MYKI). Positions 289–308 (IKSVPDTSTPTGGNSKPNSR) are disordered. BRCT domains follow at residues 354-444 (APDD…IYFH), 530-621 (ADTS…SNAL), and 629-726 (EGST…SYLV). Polar residues predominate over residues 789-799 (QHNKNPQTSGG). The interval 789–809 (QHNKNPQTSGGESKVLQREPS) is disordered. A Nuclear localization signal motif is present at residues 844 to 850 (PNQKNRT). The 93-residue stretch at 892-984 (DNSKLLINVV…KRVPEALYPH (93 aa)) folds into the BRCT 6 domain. Disordered regions lie at residues 1031 to 1053 (ETSDDQVKKAAGDGNPQNPSKDV) and 1086 to 1109 (SVGRAGFDNSPCTPEGARSTRNGR). The residue at position 1131 (serine 1131) is a Phosphoserine. 2 BRCT domains span residues 1253–1344 (SKEE…DYEW) and 1383–1480 (IAEG…NYCL). The short motif at 1508-1511 (KRSR) is the Nuclear localization signal element.

Belongs to the TOPBP1 family. In terms of assembly, interacts with cdc45. Interacts (via BRCT domains) with ticrr; interaction is cdk2-dependent. Interacts with atr in the presence of atrip. Interacts with recql4 (via N-terminus). Interacts with gmnc. Interacts with cip2a; forming the CIP2A-TOPBP1 complex. Phosphorylation at Ser-1131 is essential for phosphorylation of chek1, and thus for checkpoint regulation.

The protein localises to the nucleus. It is found in the chromosome. It localises to the cytoplasm. Its subcellular location is the cytoskeleton. The protein resides in the microtubule organizing center. The protein localises to the centrosome. It is found in the spindle pole. Scaffold protein that acts as a key protein-protein adapter in DNA replication and DNA repair. Composed of multiple BRCT domains, which specifically recognize and bind phosphorylated proteins, bringing proteins together into functional combinations. Required for DNA replication initiation but not for the formation of pre-replicative complexes or the elongation stages. Necessary for the loading of replication factors onto chromatin, including gmnc, cdc45, DNA polymerases and components of the GINS complex such as ginsl/sld5. Plays a central role in DNA repair by bridging proteins and promoting recruitment of proteins to DNA damage sites. Involved in double-strand break (DSB) repair via homologous recombination in S-phase by promoting the exchange between the DNA replication factor A (RPA) complex and RAD51. Involved in microhomology-mediated end-joining (MMEJ) DNA repair by promoting recruitment of polymerase theta (POLQ) to DNA damage sites during mitosis. In response to DNA damage, triggers the recruitment of checkpoint signaling proteins on chromatin, which activate the chek1 signaling pathway and block S-phase progression. Increases the kinase activity of atr to numerous substrates, and is required for the phosphorylation of Rad1. Together with cip2a, plays an essential role in the response to genome instability generated by the presence of acentric chromosome fragments derived from shattered chromosomes within micronuclei. The CIP2A-TOPBP1 complex tethers chromosome fragments during mitosis to ensure clustered segregation of the fragments to a single daughter cell nucleus, facilitating re-ligation with limited chromosome scattering and loss. The polypeptide is DNA topoisomerase 2-binding protein 1-A (topbp1-A) (Xenopus laevis (African clawed frog)).